A 1175-amino-acid polypeptide reads, in one-letter code: 1-phosphatidylinositol 4,5-bisphosphate phosphodiesterase beta-4 (1175 aa).

The residue at position 2 (A2) is an N-acetylalanine. Residues 313-463 (QEMDHPLAHY…LKRKILIKNK (151 aa)) form the PI-PLC X-box domain. Catalysis depends on residues H328 and H375. The disordered stretch occupies residues 487–512 (AAPASILEDDNEEEIESADQEEEAHP). Residues 493–508 (LEDDNEEEIESADQEE) show a composition bias toward acidic residues. A PI-PLC Y-box domain is found at 565 to 681 (LSTMINYAQP…GYLLKPDFMR (117 aa)). Residues 684-809 (DRTFDPFSET…SLRNEGNKPL (126 aa)) form the C2 domain. 2 disordered regions span residues 860–904 (SDIA…LGSG) and 1082–1110 (KISMENSKAISQDKSIKNKAERERRVREL). 2 stretches are compositionally biased toward polar residues: residues 885–900 (VTPQSSSELRPTTTAA) and 1085–1094 (MENSKAISQD). T886 carries the phosphothreonine modification. The segment covering 1095–1109 (KSIKNKAERERRVRE) has biased composition (basic and acidic residues).

Ca(2+) serves as cofactor. As to expression, preferentially expressed in the retina.

The protein localises to the cell membrane. It catalyses the reaction a 1,2-diacyl-sn-glycero-3-phospho-(1D-myo-inositol-4,5-bisphosphate) + H2O = 1D-myo-inositol 1,4,5-trisphosphate + a 1,2-diacyl-sn-glycerol + H(+). It carries out the reaction a 1,2-diacyl-sn-glycero-3-phospho-(1D-myo-inositol) + H2O = 1D-myo-inositol 1-phosphate + a 1,2-diacyl-sn-glycerol + H(+). Activated phosphatidylinositol-specific phospholipase C enzymes catalyze the production of the second messenger molecules diacylglycerol (DAG) and inositol 1,4,5-trisphosphate (IP3) involved in G-protein coupled receptor signaling pathways. PLCB4 is a direct effector of the endothelin receptor signaling pathway that plays an essential role in lower jaw and middle ear structures development. This is 1-phosphatidylinositol 4,5-bisphosphate phosphodiesterase beta-4 from Rattus norvegicus (Rat).